Reading from the N-terminus, the 494-residue chain is Histidine--tRNA ligase (494 aa).

It belongs to the class-II aminoacyl-tRNA synthetase family. As to quaternary structure, homodimer.

It localises to the cytoplasm. It carries out the reaction tRNA(His) + L-histidine + ATP = L-histidyl-tRNA(His) + AMP + diphosphate + H(+). The protein is Histidine--tRNA ligase of Cereibacter sphaeroides (strain ATCC 17023 / DSM 158 / JCM 6121 / CCUG 31486 / LMG 2827 / NBRC 12203 / NCIMB 8253 / ATH 2.4.1.) (Rhodobacter sphaeroides).